The sequence spans 903 residues: MLVKLLTKVFGSRNDRTLRRMRKAVELINQMEPDMEKLSDDELKAKTNEFRARLEKGEVLENLLPEAFAVVRESSKRVFGMRHFDVQLLGGMVLNDRCIAEMRTGEGKTLTATLPAYLNALSGRGVHVVTVNDYLAQRDAENNRPLFEFLGLSIGINLPGMPAPAKREAYAADITYGTNNEYGFDYLRDNMAFSPEERVQRKLHYALVDEVDSILIDEARTPLIISGPAEDSSEMYIRVNKLIPQLIRQEKEDSDSFQGEGHFSVDEKARQVHLTERGLILIEEMLMEAGIMDEGESLYSPTNIMLMHHVTAALRAHVLFTRDVDYIVKDGEVIIVDEHTGRTMQGRRWSDGLHQAVEAKEGVEIQNENQTLASITFQNYFRLYEKLAGMTGTADTEAFEFSSIYKLDTIVVPTNRPMIRKDMPDLVYMTELEKIGAIIEDIRERTVNGQPVLVGTISIEKSEVVSRELTKAGIEHKVLNAKFHAMEADIVAQAGQSSAVTIATNMAGRGTDIVLGGSWQAEIEQLEDPTEEQIAEIKAAWKIRHDAVLAAGGLHIIGTERHESRRIDNQLRGRSGRQGDAGSSRFYLSMEDALMRIFASDRVSSMMRKLGMKEGEAIEHPWVTKAIANAQRKVESRNFDIRKQLLEYDDVANDQRRAIYSQRNELLDVSDVSETITSIREDVFKTTIDGYIQPESLEEEWDIEGLTERLKNDFDLDMPIAEWLDKEPQLHEETLRERILEKAKEEYQRKEEVVGVEMMRNFEKGVMLQTLDSLWKEHLAAMDYLRQGIHLRGYAQKDPKQEYKRESFNMFATMLESLKHEVISVLSKVQVRMPEEVEALELQRREEAERLAKQQQLSHYEENALVTEDPNAPATAERKVGRNDPCPCGSGKKYKQCHGRLQS.

ATP-binding positions include Gln-87, 105 to 109, and Asp-512; that span reads GEGKT. The interval 853–903 is disordered; that stretch reads KQQQLSHYEENALVTEDPNAPATAERKVGRNDPCPCGSGKKYKQCHGRLQS. Positions 886, 888, 897, and 898 each coordinate Zn(2+). A compositionally biased stretch (basic residues) spans 892–903; the sequence is KKYKQCHGRLQS.

It belongs to the SecA family. As to quaternary structure, monomer and homodimer. Part of the essential Sec protein translocation apparatus which comprises SecA, SecYEG and auxiliary proteins SecDF-YajC and YidC. The cofactor is Zn(2+).

Its subcellular location is the cell inner membrane. It is found in the cytoplasm. The catalysed reaction is ATP + H2O + cellular proteinSide 1 = ADP + phosphate + cellular proteinSide 2.. Functionally, part of the Sec protein translocase complex. Interacts with the SecYEG preprotein conducting channel. Has a central role in coupling the hydrolysis of ATP to the transfer of proteins into and across the cell membrane, serving both as a receptor for the preprotein-SecB complex and as an ATP-driven molecular motor driving the stepwise translocation of polypeptide chains across the membrane. This Serratia proteamaculans (strain 568) protein is Protein translocase subunit SecA.